The sequence spans 729 residues: Polyribonucleotide nucleotidyltransferase (729 aa).

Positions 485 and 491 each coordinate Mg(2+). In terms of domain architecture, KH spans 552–611 (PRITTMKVAEDKIRTIIGKGGATIKGLIESTGVSIDIDDSGVIQLFSPDKMALEEAQKQI). In terms of domain architecture, S1 motif spans 621–689 (GQTYQGKVSK…KQGRVKLEWK (69 aa)).

It belongs to the polyribonucleotide nucleotidyltransferase family. Component of the RNA degradosome, which is a multiprotein complex involved in RNA processing and mRNA degradation. Mg(2+) serves as cofactor.

It localises to the cytoplasm. The enzyme catalyses RNA(n+1) + phosphate = RNA(n) + a ribonucleoside 5'-diphosphate. In terms of biological role, involved in mRNA degradation. Catalyzes the phosphorolysis of single-stranded polyribonucleotides processively in the 3'- to 5'-direction. This Legionella pneumophila (strain Corby) protein is Polyribonucleotide nucleotidyltransferase.